The sequence spans 296 residues: 2-methylisocitrate lyase (296 aa).

45–47 (SGG) is a substrate binding site. Mg(2+) is bound by residues Asp85 and Asp87. Residues 123–124 (CG), Arg158, Glu188, 210–212 (NIT), Arg241, and Arg270 contribute to the substrate site.

It belongs to the isocitrate lyase/PEP mutase superfamily. Methylisocitrate lyase family. In terms of assembly, homotetramer; dimer of dimers. The cofactor is Mg(2+).

It carries out the reaction (2S,3R)-3-hydroxybutane-1,2,3-tricarboxylate = pyruvate + succinate. Its pathway is organic acid metabolism; propanoate degradation. Involved in the catabolism of short chain fatty acids (SCFA) via the 2-methylcitrate cycle I (propionate degradation route). Catalyzes the thermodynamically favored C-C bond cleavage of (2R,3S)-2-methylisocitrate to yield pyruvate and succinate via an alpha-carboxy-carbanion intermediate. This Escherichia coli (strain K12) protein is 2-methylisocitrate lyase.